We begin with the raw amino-acid sequence, 1205 residues long: Solute carrier family 12 member 2 (1205 aa).

Met-1 is modified (N-acetylmethionine). Residues 1 to 22 (MEPGPARPRLAPAARPGWGRAA) are compositionally biased toward low complexity. Positions 1 to 102 (MEPGPARPRL…AAAAAAAAAA (102 aa)) are disordered. At 1–279 (MEPGPARPRL…AESKGVVKFG (279 aa)) the chain is on the cytoplasmic side. Over residues 23–35 (GCRRRGGPARHGR) the composition is skewed to basic residues. 2 positions are modified to phosphoserine: Ser-74 and Ser-76. The RFXV motif 1 signature appears at 77–80 (RFQV). Residues 87–102 (AGRAAAAAAAAAAAAA) are compositionally biased toward low complexity. The RFXV motif 2 signature appears at 133–136 (RFRV). Positions 143-155 (ASSSADDSLSDAA) are enriched in low complexity. The interval 143 to 187 (ASSSADDSLSDAAGVGGDGPNVSFQNGGDTVLSEGSSLHSGGGSG) is disordered. Phosphothreonine is present on residues Thr-196, Thr-200, Thr-205, Thr-210, and Thr-223. A Phosphoserine modification is found at Ser-235. Thr-259 carries the phosphothreonine modification. A discontinuously helical membrane pass occupies residues 280–309 (WIKGVLVRCMLNIWGVMLFIRLSWIVGQAG). Leu-290 is a Na(+) binding site. Asn-291 and Ile-292 together coordinate K(+). Trp-293 is a Na(+) binding site. Chloride is bound by residues Gly-294, Val-295, and Met-296. Residues 310–329 (IGLSVVVIAMATVVTTITGL) form a helical membrane-spanning segment. The Cytoplasmic segment spans residues 330 to 360 (STSAIATNGFVRGGGAYYLISRSLGPEFGGA). The helical transmembrane segment at 361–388 (IGLIFAFANAVAVAMYVVGFAETVVELL) threads the bilayer. Phe-365 contributes to the chloride binding site. Tyr-376 contacts K(+). Residues 389–398 (KEHSILMIDE) lie on the Extracellular side of the membrane. Residues 399-422 (INDIRIIGAITVVILLGISVAGME) form a helical membrane-spanning segment. Over 423 to 425 (WEA) the chain is Cytoplasmic. The helical transmembrane segment at 426–447 (KAQIVLLVILLLAIADFVIGTF) threads the bilayer. Residues 448-479 (ISLESKKPKGFFGYKSEIFNENFGPDFREEET) lie on the Extracellular side of the membrane. Residues 480–497 (FFSVFAIFFPAATGILAG) form a discontinuously helical membrane-spanning segment. K(+)-binding residues include Pro-489, Ala-490, and Thr-492. Residues Pro-489 and Ala-490 each contribute to the chloride site. Chloride is bound by residues Gly-493 and Ile-494. The Cytoplasmic portion of the chain corresponds to 498 to 512 (ANISGDLADPQSAIP). Residues 513-534 (KGTLLAILITTVVYIGIAVSVG) form a helical membrane-spanning segment. At 535 to 591 (SCVVRDATGNVNDTITTELTNCTSAACKLNFDFSYCESNTCSYGLMNNFQVMSMVSG) the chain is on the extracellular side. N-linked (GlcNAc...) asparagine glycosylation is found at Asn-546 and Asn-555. Disulfide bonds link Cys-556–Cys-561 and Cys-570–Cys-575. A helical membrane pass occupies residues 592–616 (FAPLISAGIFSATLSSALASLVSAP). The Na(+) site is built by Ala-603, Ser-606, and Ser-607. The Cytoplasmic portion of the chain corresponds to 617–644 (KIFQALCKDNIYPAFQMFAKGYGKNNEP). Helical transmembrane passes span 645–665 (LRGYILTFLIALGFILIAELN) and 666–684 (VIAPIISNFFLASYALINF). Residues Phe-675 and Tyr-679 each contribute to the chloride site. At 685–707 (SVFHASLAKSPGWRPAFKYYNMW) the chain is on the cytoplasmic side. Helical transmembrane passes span 708-725 (ISLIGAILCCIVMFVINW) and 726-738 (WAALLTYVIVLGL). The Cytoplasmic portion of the chain corresponds to 739 to 1205 (YIYVTYKKPD…NHQSVLTFYS (467 aa)). Residues 754 to 771 (STQALTYLSALQHSIRLS) are scissor helix. Ser-933 and Ser-937 each carry phosphoserine. A disordered region spans residues 953-986 (SDQDTCKSSGEKSITQKDEEEDGKTPTQPLLKKE). The residue at position 987 (Ser-987) is a Phosphoserine.

The protein belongs to the SLC12A transporter family. In terms of assembly, homodimer; adopts a domain-swap conformation at the scissor helices connecting the transmembrane domain and C-terminal domain. In terms of processing, phosphorylated at Thr-196, Thr-200 and Thr-205 by OXSR1/OSR1 and STK39/SPAK downstream of WNK kinases (WNK1, WNK2, WNK3 or WNK4), promoting its activity. In terms of tissue distribution, widely expressed. High expression found in the cochlea, cochlear lateral wall, and the choroid plexus. Lower expression found in the cerebellum and the cortex.

The protein localises to the basolateral cell membrane. It carries out the reaction K(+)(out) + 2 chloride(out) + Na(+)(out) = K(+)(in) + 2 chloride(in) + Na(+)(in). Its activity is regulated as follows. Activated following phosphorylation by OXSR1/OSR1 and STK39/SPAK downstream of WNK kinases (WNK1, WNK2, WNK3 or WNK4). Inhibited by bumetanide and furosemide. Functionally, cation-chloride cotransporter which mediates the electroneutral transport of chloride, potassium and/or sodium ions across the membrane. Plays a vital role in the regulation of ionic balance and cell volume. This is Solute carrier family 12 member 2 (Slc12a2) from Mus musculus (Mouse).